We begin with the raw amino-acid sequence, 506 residues long: Maturase K (506 aa).

This sequence belongs to the intron maturase 2 family. MatK subfamily.

It localises to the plastid. Its subcellular location is the chloroplast. Functionally, usually encoded in the trnK tRNA gene intron. Probably assists in splicing its own and other chloroplast group II introns. The sequence is that of Maturase K from Carica papaya (Papaya).